The sequence spans 148 residues: MKKVTGQIKLQLPAGKANPAPPVGPALGQHGVNIMEFCKQFNAATQAQAKEALIIPVIITVYQDRSFTFQLKTPPAAILLKKAAGLHTEKKKGSGAHKPGKEKVGQVTRKQVEQIAKTKMQDMTAGSLEAAMRTVEGTALSMGIDVVG.

Residues 89-108 (EKKKGSGAHKPGKEKVGQVT) are disordered.

Belongs to the universal ribosomal protein uL11 family. Part of the ribosomal stalk of the 50S ribosomal subunit. Interacts with L10 and the large rRNA to form the base of the stalk. L10 forms an elongated spine to which L12 dimers bind in a sequential fashion forming a multimeric L10(L12)X complex. In terms of processing, one or more lysine residues are methylated.

Its function is as follows. Forms part of the ribosomal stalk which helps the ribosome interact with GTP-bound translation factors. The chain is Large ribosomal subunit protein uL11 from Anaeromyxobacter sp. (strain Fw109-5).